We begin with the raw amino-acid sequence, 687 residues long: MSVRYPLLNRELGILGFNERVLAQAADPQVPLLERLRFICITSSNLDEFFEVRMAGLQEQIRDNPGALTPDGMSLQHAYDLVVERAQRLVHRQYTMLHETVLPALEQEGIYFHAADTWNDEQLEWARRYFLDELLPVLTPIGLDPAHPFPRVLNKSLNFVVELEGRDAFGRQAVMGIVQAPRALPRVVRMPQALSGFEHGFVLLSTFMQRFVGELFPQLVVKSCNQFRITRNSELFVDEDEITNLRVALQGELPARHLGNAVRLEVSADTPAHIVRRLLEESLLDEKDCYRVAGSVNLVRLMQIPDLVDRPDLKFAPFTASIPPVIANAPAMFDAIDDGDILLHHPYESFQPVLELLQQAAKDPSVVAIKQTIYRTGTDSPLMDALMAAARNGKEVTVVVELLARFDEETNINWASQLEAVGAHVVYGVVGHKCHAKMMLIVRRVVEGGKATLRRYVHLGTGNYHPRTARLYTDFGLMTADQKICEDVHHVFQQLTGIGGELTLHELWQSPFTLHPRIIESIRAEIDNARAGKRARVVAKMNALLEPTVIAALYEASQAGVKVDLIVRGVCALKPGVPGLSENITVRSIVGRFLEHHRIYYFHADGAEEVYLSSADWMDRNLFRRVEVAFPIRERKLKRRVIAEGLSVCLGDNQSAWLMQSDGHYRRRRAGKTLRNAQLGLLAKFCS.

Residue Asn-45 participates in ATP binding. Residues Arg-375 and Arg-405 each coordinate Mg(2+). His-435 acts as the Phosphohistidine intermediate in catalysis. Positions 472, 568, and 596 each coordinate ATP.

The protein belongs to the polyphosphate kinase 1 (PPK1) family. Mg(2+) is required as a cofactor. In terms of processing, an intermediate of this reaction is the autophosphorylated ppk in which a phosphate is covalently linked to a histidine residue through a N-P bond.

The catalysed reaction is [phosphate](n) + ATP = [phosphate](n+1) + ADP. Its function is as follows. Catalyzes the reversible transfer of the terminal phosphate of ATP to form a long-chain polyphosphate (polyP). This chain is Polyphosphate kinase, found in Burkholderia ambifaria (strain ATCC BAA-244 / DSM 16087 / CCUG 44356 / LMG 19182 / AMMD) (Burkholderia cepacia (strain AMMD)).